The sequence spans 179 residues: Cell division protein SepF (179 aa).

Residues 19–55 are disordered; it reads DSSLPYEKRDEPVFTSVNSSQEPALPMNQPSQSAGAK. Positions 33–55 are enriched in polar residues; sequence TSVNSSQEPALPMNQPSQSAGAK.

It belongs to the SepF family. Homodimer. Interacts with FtsZ.

It is found in the cytoplasm. Its function is as follows. Cell division protein that is part of the divisome complex and is recruited early to the Z-ring. Probably stimulates Z-ring formation, perhaps through the cross-linking of FtsZ protofilaments. Its function overlaps with FtsA. The sequence is that of Cell division protein SepF from Streptococcus pneumoniae (strain JJA).